The following is a 285-amino-acid chain: Nucleotide-binding protein Gmet_1286 (285 aa).

8–15 (GLSGSGKS) lines the ATP pocket. 59–62 (DIRG) lines the GTP pocket.

The protein belongs to the RapZ-like family.

Displays ATPase and GTPase activities. The polypeptide is Nucleotide-binding protein Gmet_1286 (Geobacter metallireducens (strain ATCC 53774 / DSM 7210 / GS-15)).